The following is a 260-amino-acid chain: Acetylglutamate kinase (260 aa).

Substrate contacts are provided by residues 46 to 47, arginine 68, and asparagine 160; that span reads GG.

It belongs to the acetylglutamate kinase family. ArgB subfamily.

It is found in the cytoplasm. The catalysed reaction is N-acetyl-L-glutamate + ATP = N-acetyl-L-glutamyl 5-phosphate + ADP. Its pathway is amino-acid biosynthesis; L-arginine biosynthesis; N(2)-acetyl-L-ornithine from L-glutamate: step 2/4. Functionally, catalyzes the ATP-dependent phosphorylation of N-acetyl-L-glutamate. The chain is Acetylglutamate kinase from Shewanella putrefaciens (strain CN-32 / ATCC BAA-453).